Here is a 98-residue protein sequence, read N- to C-terminus: Aspartyl/glutamyl-tRNA(Asn/Gln) amidotransferase subunit C (98 aa).

Belongs to the GatC family. As to quaternary structure, heterotrimer of A, B and C subunits.

The catalysed reaction is L-glutamyl-tRNA(Gln) + L-glutamine + ATP + H2O = L-glutaminyl-tRNA(Gln) + L-glutamate + ADP + phosphate + H(+). It carries out the reaction L-aspartyl-tRNA(Asn) + L-glutamine + ATP + H2O = L-asparaginyl-tRNA(Asn) + L-glutamate + ADP + phosphate + 2 H(+). Allows the formation of correctly charged Asn-tRNA(Asn) or Gln-tRNA(Gln) through the transamidation of misacylated Asp-tRNA(Asn) or Glu-tRNA(Gln) in organisms which lack either or both of asparaginyl-tRNA or glutaminyl-tRNA synthetases. The reaction takes place in the presence of glutamine and ATP through an activated phospho-Asp-tRNA(Asn) or phospho-Glu-tRNA(Gln). The chain is Aspartyl/glutamyl-tRNA(Asn/Gln) amidotransferase subunit C from Gloeothece citriformis (strain PCC 7424) (Cyanothece sp. (strain PCC 7424)).